The primary structure comprises 187 residues: Cell division protein SepF (187 aa).

Positions 21–97 (EVEVPDKQQQ…ATPNNASQES (77 aa)) are disordered. Polar residues-rich tracts occupy residues 38–63 (EQSQQTTKQNAIKSVPQKSASRYTTT) and 70–97 (RMSNYSKNNSRNVVTMNNATPNNASQES).

The protein belongs to the SepF family. In terms of assembly, homodimer. Interacts with FtsZ.

It is found in the cytoplasm. In terms of biological role, cell division protein that is part of the divisome complex and is recruited early to the Z-ring. Probably stimulates Z-ring formation, perhaps through the cross-linking of FtsZ protofilaments. Its function overlaps with FtsA. This Staphylococcus aureus (strain Mu3 / ATCC 700698) protein is Cell division protein SepF.